The primary structure comprises 171 residues: Transcription elongation factor GreB (171 aa).

Residues Lys53 to Ile75 adopt a coiled-coil conformation.

The protein belongs to the GreA/GreB family. GreB subfamily.

Its function is as follows. Necessary for efficient RNA polymerase transcription elongation past template-encoded arresting sites. The arresting sites in DNA have the property of trapping a certain fraction of elongating RNA polymerases that pass through, resulting in locked ternary complexes. Cleavage of the nascent transcript by cleavage factors such as GreA or GreB allows the resumption of elongation from the new 3'terminus. GreB releases sequences of up to 9 nucleotides in length. The chain is Transcription elongation factor GreB from Yersinia pestis.